The following is a 579-amino-acid chain: Multidrug resistance-like ATP-binding protein MdlA (579 aa).

One can recognise an ABC transmembrane type-1 domain in the interval 18 to 303 (YTIAIFLLIS…FAWMFNIIER (286 aa)). 6 consecutive transmembrane segments (helical) span residues 20–40 (IAIF…KLIG), 53–73 (KAPI…IYIL), 134–154 (GVLT…VMIT), 155–175 (QISW…AIII), 247–267 (IIHL…SYMI), and 281–301 (ILYL…FNII). The ABC transporter domain maps to 338–572 (VKINYFKYSK…LKQWYGKTYL (235 aa)). Residue 370–377 (GPTGSGKS) participates in ATP binding.

This sequence belongs to the ABC transporter superfamily. Drug exporter-2 (TC 3.A.1.117) family.

It is found in the cell membrane. It carries out the reaction ATP + H2O + xenobioticSide 1 = ADP + phosphate + xenobioticSide 2.. The chain is Multidrug resistance-like ATP-binding protein MdlA (mdlA) from Buchnera aphidicola subsp. Baizongia pistaciae (strain Bp).